A 457-amino-acid polypeptide reads, in one-letter code: ATP synthase subunit beta (457 aa).

147-154 (GGAGVGKT) contributes to the ATP binding site.

It belongs to the ATPase alpha/beta chains family. F-type ATPases have 2 components, CF(1) - the catalytic core - and CF(0) - the membrane proton channel. CF(1) has five subunits: alpha(3), beta(3), gamma(1), delta(1), epsilon(1). CF(0) has three main subunits: a(1), b(2) and c(9-12). The alpha and beta chains form an alternating ring which encloses part of the gamma chain. CF(1) is attached to CF(0) by a central stalk formed by the gamma and epsilon chains, while a peripheral stalk is formed by the delta and b chains.

The protein resides in the cell inner membrane. The catalysed reaction is ATP + H2O + 4 H(+)(in) = ADP + phosphate + 5 H(+)(out). Functionally, produces ATP from ADP in the presence of a proton gradient across the membrane. The catalytic sites are hosted primarily by the beta subunits. This Histophilus somni (strain 129Pt) (Haemophilus somnus) protein is ATP synthase subunit beta.